We begin with the raw amino-acid sequence, 428 residues long: Glutamate-1-semialdehyde 2,1-aminomutase (428 aa).

K267 is subject to N6-(pyridoxal phosphate)lysine.

Belongs to the class-III pyridoxal-phosphate-dependent aminotransferase family. HemL subfamily. In terms of assembly, homodimer. Requires pyridoxal 5'-phosphate as cofactor.

The protein localises to the cytoplasm. It carries out the reaction (S)-4-amino-5-oxopentanoate = 5-aminolevulinate. It functions in the pathway porphyrin-containing compound metabolism; protoporphyrin-IX biosynthesis; 5-aminolevulinate from L-glutamyl-tRNA(Glu): step 2/2. The protein is Glutamate-1-semialdehyde 2,1-aminomutase of Persephonella marina (strain DSM 14350 / EX-H1).